The chain runs to 122 residues: Large ribosomal subunit protein uL14 (122 aa).

The protein belongs to the universal ribosomal protein uL14 family. As to quaternary structure, part of the 50S ribosomal subunit. Forms a cluster with proteins L3 and L19. In the 70S ribosome, L14 and L19 interact and together make contacts with the 16S rRNA in bridges B5 and B8.

Functionally, binds to 23S rRNA. Forms part of two intersubunit bridges in the 70S ribosome. The polypeptide is Large ribosomal subunit protein uL14 (Protochlamydia amoebophila (strain UWE25)).